We begin with the raw amino-acid sequence, 318 residues long: Probable arabinan endo-1,5-alpha-L-arabinosidase C (318 aa).

Positions 1 to 28 (MLSFVLLLCVALVNAYSDPGACSGTCWA) are cleaved as a signal peptide. The Proton acceptor role is filled by D30. N-linked (GlcNAc...) asparagine glycosylation is found at N72, N80, and N188. The active-site Proton donor is E196. N277 carries an N-linked (GlcNAc...) asparagine glycan.

Belongs to the glycosyl hydrolase 43 family.

The protein localises to the secreted. It carries out the reaction Endohydrolysis of (1-&gt;5)-alpha-arabinofuranosidic linkages in (1-&gt;5)-arabinans.. It participates in glycan metabolism; L-arabinan degradation. In terms of biological role, endo-1,5-alpha-L-arabinanase involved in degradation of pectin. Its preferred substrate is linear 1,5-alpha-L-arabinan. This is Probable arabinan endo-1,5-alpha-L-arabinosidase C (abnC) from Aspergillus niger (strain ATCC MYA-4892 / CBS 513.88 / FGSC A1513).